We begin with the raw amino-acid sequence, 73 residues long: Conotoxin Bt11.1 (73 aa).

An N-terminal signal peptide occupies residues 1 to 20; it reads MKLCVAFLLVLVILPSVIGG. Positions 21-35 are excised as a propeptide; the sequence is KPSERTLSGATRRGD. 4 disulfide bridges follow: cysteine 39–cysteine 53, cysteine 46–cysteine 58, cysteine 52–cysteine 63, and cysteine 57–cysteine 70.

It belongs to the conotoxin I1 superfamily. Expressed by the venom duct.

Its subcellular location is the secreted. This chain is Conotoxin Bt11.1, found in Conus betulinus (Beech cone).